The chain runs to 405 residues: Type II secretion system protein F (405 aa).

Over 1–168 (MAAFEYLALD…QRQQSRQKIQ (168 aa)) the chain is Cytoplasmic. Ca(2+) contacts are provided by Thr97, Glu151, and Asp155. Residues 169-189 (LALLYPVILMVASLAIVGFLL) form a helical membrane-spanning segment. Residues 190–219 (GYVVPDVVRVFIDSGQTLPLLTRVLIGVSD) are Periplasmic-facing. Residues 220–239 (WVKAWGALAFVAAIGGVIGF) traverse the membrane as a helical segment. Topologically, residues 240-376 (RYALRKDAFR…IGLMVGLFEP (137 aa)) are cytoplasmic. A helical membrane pass occupies residues 377–397 (FMLIFMGAVVLVIVLAILLPI). At 398-405 (LSLNQLVG) the chain is on the periplasmic side.

Belongs to the GSP F family. Type II secretion system is composed of four main components: the outer membrane complex, the inner membrane complex, the cytoplasmic secretion ATPase and the periplasm-spanning pseudopilus. Homodimer. Interacts with XcpR/GspE and XcpY/GspL components.

It is found in the cell inner membrane. Functionally, component of the type II secretion system inner membrane complex required for the energy-dependent secretion of extracellular factors such as proteases and toxins from the periplasm. The polypeptide is Type II secretion system protein F (xcpS) (Pseudomonas aeruginosa (strain ATCC 15692 / DSM 22644 / CIP 104116 / JCM 14847 / LMG 12228 / 1C / PRS 101 / PAO1)).